The chain runs to 305 residues: Oxygen-dependent coproporphyrinogen-III oxidase (305 aa).

Ser-93 is a binding site for substrate. A divalent metal cation-binding residues include His-97 and His-107. The active-site Proton donor is the His-107. Residue 109 to 111 (NVR) coordinates substrate. 2 residues coordinate a divalent metal cation: His-146 and His-176. Residues 241–276 (YVEFNLVFDRGTLFGLQSGGRTESILMSLPPQVRWG) are important for dimerization. Residue 259–261 (GGR) participates in substrate binding.

This sequence belongs to the aerobic coproporphyrinogen-III oxidase family. Homodimer. Requires a divalent metal cation as cofactor.

It localises to the cytoplasm. The enzyme catalyses coproporphyrinogen III + O2 + 2 H(+) = protoporphyrinogen IX + 2 CO2 + 2 H2O. It participates in porphyrin-containing compound metabolism; protoporphyrin-IX biosynthesis; protoporphyrinogen-IX from coproporphyrinogen-III (O2 route): step 1/1. In terms of biological role, involved in the heme biosynthesis. Catalyzes the aerobic oxidative decarboxylation of propionate groups of rings A and B of coproporphyrinogen-III to yield the vinyl groups in protoporphyrinogen-IX. The chain is Oxygen-dependent coproporphyrinogen-III oxidase from Pseudomonas aeruginosa (strain UCBPP-PA14).